The chain runs to 408 residues: uncharacterized protein (408 aa).

This is an uncharacterized protein from Methanocaldococcus jannaschii (strain ATCC 43067 / DSM 2661 / JAL-1 / JCM 10045 / NBRC 100440) (Methanococcus jannaschii).